The chain runs to 154 residues: Aspartate carbamoyltransferase regulatory chain (154 aa).

4 residues coordinate Zn(2+): Cys111, Cys116, Cys139, and Cys142.

The protein belongs to the PyrI family. In terms of assembly, contains catalytic and regulatory chains. Zn(2+) is required as a cofactor.

In terms of biological role, involved in allosteric regulation of aspartate carbamoyltransferase. The chain is Aspartate carbamoyltransferase regulatory chain from Parabacteroides distasonis (strain ATCC 8503 / DSM 20701 / CIP 104284 / JCM 5825 / NCTC 11152).